An 800-amino-acid polypeptide reads, in one-letter code: Phenylalanine--tRNA ligase beta subunit (800 aa).

In terms of domain architecture, tRNA-binding spans 39 to 154 (TKEIKNLVVG…TEVKPGTDAL (116 aa)). One can recognise a B5 domain in the interval 408 to 483 (CFVTPIDISV…RIYGYDKIPS (76 aa)). Mg(2+) contacts are provided by aspartate 461, aspartate 467, glutamate 470, and glutamate 471. In terms of domain architecture, FDX-ACB spans 708-800 (PRFPGVSRDI…ALKSEGATIR (93 aa)).

It belongs to the phenylalanyl-tRNA synthetase beta subunit family. Type 1 subfamily. As to quaternary structure, tetramer of two alpha and two beta subunits. Requires Mg(2+) as cofactor.

It is found in the cytoplasm. The catalysed reaction is tRNA(Phe) + L-phenylalanine + ATP = L-phenylalanyl-tRNA(Phe) + AMP + diphosphate + H(+). The sequence is that of Phenylalanine--tRNA ligase beta subunit from Staphylococcus saprophyticus subsp. saprophyticus (strain ATCC 15305 / DSM 20229 / NCIMB 8711 / NCTC 7292 / S-41).